Here is a 332-residue protein sequence, read N- to C-terminus: N-arachidonyl glycine receptor (332 aa).

Residues 1–26 (MTTPHSQAQPGLPIDPHPDEYKVAAL) lie on the Extracellular side of the membrane. Residues 27–47 (VFYSCIFIIGLFVNVTALWVF) form a helical membrane-spanning segment. At 48-56 (SCTTKKRTT) the chain is on the cytoplasmic side. A helical membrane pass occupies residues 57 to 77 (VTVYMMNVALLDLVFIMSLPF). At 78-95 (RMLYYAKGEWPFGEYFCR) the chain is on the extracellular side. Cys-94 and Cys-173 are disulfide-bonded. A helical membrane pass occupies residues 96 to 116 (ILGALTVFYPSIALWLLAFIS). Residues 117-138 (ADRYMAIVQPKYAKELKNTCKA) lie on the Cytoplasmic side of the membrane. The helical transmembrane segment at 139–159 (VMACVGVWIMTLTTTIPLLLL) threads the bilayer. Topologically, residues 160–192 (YEDPDTASSTPPTCLKISDIIYLKAINALNFTR) are extracellular. Residue Asn-189 is glycosylated (N-linked (GlcNAc...) asparagine). The chain crosses the membrane as a helical span at residues 193-213 (LIFFFLIPLFIMIGCYLVIIH). Topologically, residues 214-233 (SLLHGKTSKLKPKVKEKSIR) are cytoplasmic. Residues 234–254 (IIITLMVQVLVCFMPFHICFA) form a helical membrane-spanning segment. The Extracellular portion of the chain corresponds to 255–269 (FLMLGGDENSYNPWG). A helical transmembrane segment spans residues 270-290 (AFTTFLMNLSTCLDVILYYIV). The Cytoplasmic portion of the chain corresponds to 291–332 (SKQFQARVISVMLYRNYLRSVRRKSFRSGSLRSLSNINSEML). Ser-323 carries the post-translational modification Phosphoserine.

The protein belongs to the G-protein coupled receptor 1 family.

Its subcellular location is the cell membrane. It is found in the cytoplasmic vesicle membrane. Functionally, g protein-coupled receptor (GPCR) that plays a role in diverse physiological processes particularly within the immune and nervous systems. Becomes active when triggered by various endogenous ligands including endocannabinoid N-arachidonyl glycine (NAGly), delta-9-tetrahydrocannabinol or resolvin D2/RvD2 derived from the omega-3 fatty acid docosahexaenoic acid (DHA). Upon RvD2 binding, facilitates the resolution of inflammation, aiding in tissue repair and homeostasis. Mechanistically, RvD2 ligation initiates Galphas protein coupling, activation of cAMP-PKA signaling pathway and phosphorylation of STAT3, leading to RvD2-stimulated macrophage phagocytosis. Mediates NAGly-induced process of reorganization of actin filaments and induction of acrosomal exocytosis. Activation by N-arachidonoyl glycine (NAGly) can also induce apoptosis in macrophages. Plays a role in homeostasis of CD8+ subsets of intraepithelial lymphocytes (IELs) (CD8alphaalpha and CD8alphabeta IELs) in small intestine by supporting preferential migration of CD8alphaalpha T-cells to intraepithelial compartment over lamina propria compartment, and by mediating their reconstitution into small intestine after bone marrow transplant. Participates also in hypotensive responses, mediating reduction in intraocular and blood pressure. In Bos taurus (Bovine), this protein is N-arachidonyl glycine receptor (GPR18).